The sequence spans 456 residues: ATP synthase subunit beta 1 (456 aa).

152–159 (GGAGVGKS) is an ATP binding site.

This sequence belongs to the ATPase alpha/beta chains family. As to quaternary structure, F-type ATPases have 2 components, CF(1) - the catalytic core - and CF(0) - the membrane proton channel. CF(1) has five subunits: alpha(3), beta(3), gamma(1), delta(1), epsilon(1). CF(0) has three main subunits: a(1), b(2) and c(9-12). The alpha and beta chains form an alternating ring which encloses part of the gamma chain. CF(1) is attached to CF(0) by a central stalk formed by the gamma and epsilon chains, while a peripheral stalk is formed by the delta and b chains.

The protein resides in the cell membrane. It catalyses the reaction ATP + H2O + 4 H(+)(in) = ADP + phosphate + 5 H(+)(out). In terms of biological role, produces ATP from ADP in the presence of a proton gradient across the membrane. The catalytic sites are hosted primarily by the beta subunits. This is ATP synthase subunit beta 1 from Listeria innocua serovar 6a (strain ATCC BAA-680 / CLIP 11262).